The following is a 286-amino-acid chain: ATP synthase gamma chain (286 aa).

The protein belongs to the ATPase gamma chain family. In terms of assembly, F-type ATPases have 2 components, CF(1) - the catalytic core - and CF(0) - the membrane proton channel. CF(1) has five subunits: alpha(3), beta(3), gamma(1), delta(1), epsilon(1). CF(0) has three main subunits: a, b and c.

The protein localises to the cell inner membrane. In terms of biological role, produces ATP from ADP in the presence of a proton gradient across the membrane. The gamma chain is believed to be important in regulating ATPase activity and the flow of protons through the CF(0) complex. In Fuscovulum blasticum (Rhodobacter blasticus), this protein is ATP synthase gamma chain.